Here is a 258-residue protein sequence, read N- to C-terminus: Alpha-fibrinogenase albofibrase (258 aa).

The signal sequence occupies residues 1–18 (MVLIRVLANLLILQLSYA). The propeptide occupies 19–24 (QKSSEL). Residues 25 to 249 (VVGGDECNIN…YNDWIQSIIA (225 aa)) form the Peptidase S1 domain. 6 disulfide bridges follow: Cys-31/Cys-163, Cys-50/Cys-66, Cys-98/Cys-256, Cys-142/Cys-210, Cys-174/Cys-189, and Cys-200/Cys-225. Asn-44 carries N-linked (GlcNAc...) asparagine glycosylation. Residues His-65 and Asp-110 each act as charge relay system in the active site. Ser-204 (charge relay system) is an active-site residue.

The protein belongs to the peptidase S1 family. Snake venom subfamily. Monomer. In terms of tissue distribution, expressed by the venom gland.

The protein localises to the secreted. Functionally, the recombinant protein has fibrinogenolytic activity against the Aalpha chain (FGA) of fibrinogen. Activates plasminogen (PLG) (is 4-fold less active than urokinase). Has weak thrombin-like enzyme activity. Has enzymatic activity against a trypsin-like substrate (S-3013) and shows a weaker activity on an activated protein C substrate (S-3125). This chain is Alpha-fibrinogenase albofibrase, found in Trimeresurus albolabris (White-lipped pit viper).